A 126-amino-acid polypeptide reads, in one-letter code: SH2 domain-containing protein 1A (126 aa).

Residues 6-102 (VYHGKISREM…GIVTPLQYPV (97 aa)) enclose the SH2 domain. The interaction with FYN SH3 domain stretch occupies residues 67–92 (ETAPGVHKRFFRKVKNLISAFQKPDQ). Position 89 is an N6-acetyllysine (lysine 89). The disordered stretch occupies residues 100–126 (YPVEKSSARSPQAPTGRRDSDICLKAP). A compositionally biased stretch (basic and acidic residues) spans 115–126 (GRRDSDICLKAP). Serine 119 carries the phosphoserine modification.

As to quaternary structure, interacts with CD84, CD244, LY9, SLAMF1 and FYN. Interacts with NTRK1, NTRK2 and NTRK3.

Its subcellular location is the cytoplasm. Cytoplasmic adapter regulating receptors of the signaling lymphocytic activation molecule (SLAM) family such as SLAMF1, CD244, LY9, CD84, SLAMF6 and SLAMF7. In SLAM signaling seems to cooperate with SH2D1B/EAT-2. Initially it has been proposed that association with SLAMF1 prevents SLAMF1 binding to inhibitory effectors including INPP5D/SHIP1 and PTPN11/SHP-2. However, by simultaneous interactions, recruits FYN which subsequently phosphorylates and activates SLAMF1. Positively regulates CD244/2B4- and CD84-mediated natural killer (NK) cell functions. Can also promote CD48-, SLAMF6 -, LY9-, and SLAMF7-mediated NK cell activation. In the context of NK cell-mediated cytotoxicity enhances conjugate formation with target cells. May also regulate the activity of the neurotrophin receptors NTRK1, NTRK2 and NTRK3. The sequence is that of SH2 domain-containing protein 1A (Sh2d1a) from Rattus norvegicus (Rat).